A 364-amino-acid polypeptide reads, in one-letter code: Fructose-1,6-bisphosphatase class 1 2 (364 aa).

Mg(2+) contacts are provided by glutamate 101, aspartate 123, leucine 125, and aspartate 126. Residues 126–129 and asparagine 218 each bind substrate; that span reads DGSS. Residue glutamate 290 participates in Mg(2+) binding.

Belongs to the FBPase class 1 family. In terms of assembly, homotetramer. Mg(2+) serves as cofactor.

It localises to the cytoplasm. The catalysed reaction is beta-D-fructose 1,6-bisphosphate + H2O = beta-D-fructose 6-phosphate + phosphate. It functions in the pathway carbohydrate biosynthesis; gluconeogenesis. The chain is Fructose-1,6-bisphosphatase class 1 2 from Cupriavidus necator (strain ATCC 17699 / DSM 428 / KCTC 22496 / NCIMB 10442 / H16 / Stanier 337) (Ralstonia eutropha).